A 313-amino-acid chain; its full sequence is N-acetyl-gamma-glutamyl-phosphate reductase 2 (313 aa).

C117 is an active-site residue.

The protein belongs to the NAGSA dehydrogenase family. Type 2 subfamily.

The protein resides in the cytoplasm. The enzyme catalyses N-acetyl-L-glutamate 5-semialdehyde + phosphate + NADP(+) = N-acetyl-L-glutamyl 5-phosphate + NADPH + H(+). It functions in the pathway amino-acid biosynthesis; L-arginine biosynthesis; N(2)-acetyl-L-ornithine from L-glutamate: step 3/4. In terms of biological role, catalyzes the NADPH-dependent reduction of N-acetyl-5-glutamyl phosphate to yield N-acetyl-L-glutamate 5-semialdehyde. This Pseudomonas putida (strain ATCC 47054 / DSM 6125 / CFBP 8728 / NCIMB 11950 / KT2440) protein is N-acetyl-gamma-glutamyl-phosphate reductase 2.